The primary structure comprises 340 residues: Phosphoribosylformylglycinamidine cyclo-ligase (340 aa).

This sequence belongs to the AIR synthase family.

The protein localises to the cytoplasm. The enzyme catalyses 2-formamido-N(1)-(5-O-phospho-beta-D-ribosyl)acetamidine + ATP = 5-amino-1-(5-phospho-beta-D-ribosyl)imidazole + ADP + phosphate + H(+). The protein operates within purine metabolism; IMP biosynthesis via de novo pathway; 5-amino-1-(5-phospho-D-ribosyl)imidazole from N(2)-formyl-N(1)-(5-phospho-D-ribosyl)glycinamide: step 2/2. The sequence is that of Phosphoribosylformylglycinamidine cyclo-ligase from Streptococcus pneumoniae (strain P1031).